The chain runs to 246 residues: Triosephosphate isomerase (246 aa).

9 to 11 (NWK) contributes to the substrate binding site. His91 serves as the catalytic Electrophile. Catalysis depends on Glu161, which acts as the Proton acceptor. Residues Gly167, Ser206, and 227 to 228 (GG) contribute to the substrate site.

It belongs to the triosephosphate isomerase family. Homodimer.

Its subcellular location is the cytoplasm. The catalysed reaction is D-glyceraldehyde 3-phosphate = dihydroxyacetone phosphate. The protein operates within carbohydrate biosynthesis; gluconeogenesis. It functions in the pathway carbohydrate degradation; glycolysis; D-glyceraldehyde 3-phosphate from glycerone phosphate: step 1/1. In terms of biological role, involved in the gluconeogenesis. Catalyzes stereospecifically the conversion of dihydroxyacetone phosphate (DHAP) to D-glyceraldehyde-3-phosphate (G3P). This Ruegeria sp. (strain TM1040) (Silicibacter sp.) protein is Triosephosphate isomerase.